Reading from the N-terminus, the 175-residue chain is Shikimate kinase (175 aa).

Residue 14–19 participates in ATP binding; it reads GAGKST. Ser-18 contacts Mg(2+). 3 residues coordinate substrate: Asp-36, Arg-60, and Gly-82. Arg-120 is a binding site for ATP. Arg-140 serves as a coordination point for substrate. Gln-157 is a binding site for ATP.

Belongs to the shikimate kinase family. As to quaternary structure, monomer. Requires Mg(2+) as cofactor.

It localises to the cytoplasm. The enzyme catalyses shikimate + ATP = 3-phosphoshikimate + ADP + H(+). The protein operates within metabolic intermediate biosynthesis; chorismate biosynthesis; chorismate from D-erythrose 4-phosphate and phosphoenolpyruvate: step 5/7. Functionally, catalyzes the specific phosphorylation of the 3-hydroxyl group of shikimic acid using ATP as a cosubstrate. This chain is Shikimate kinase, found in Mannheimia succiniciproducens (strain KCTC 0769BP / MBEL55E).